We begin with the raw amino-acid sequence, 81 residues long: Sulfur carrier protein TusA (81 aa).

The active-site Cysteine persulfide intermediate is the cysteine 19.

It belongs to the sulfur carrier protein TusA family. In terms of assembly, interacts with IscS.

The protein resides in the cytoplasm. Its pathway is tRNA modification. Its function is as follows. Sulfur carrier protein involved in sulfur trafficking in the cell. Part of a sulfur-relay system required for 2-thiolation during synthesis of 2-thiouridine of the modified wobble base 5-methylaminomethyl-2-thiouridine (mnm(5)s(2)U) in tRNA. Interacts with IscS and stimulates its cysteine desulfurase activity. Accepts an activated sulfur from IscS, which is then transferred to TusD, and thus determines the direction of sulfur flow from IscS to 2-thiouridine formation. Also appears to be involved in sulfur transfer for the biosynthesis of molybdopterin. This is Sulfur carrier protein TusA from Pectobacterium atrosepticum (strain SCRI 1043 / ATCC BAA-672) (Erwinia carotovora subsp. atroseptica).